Reading from the N-terminus, the 246-residue chain is PARP-type zinc finger-containing protein C2A9.07c (246 aa).

The segment at 8 to 99 adopts a PARP-type; degenerate zinc-finger fold; the sequence is YRVELAKTGR…EKILRAFEQG (92 aa). Over residues 103–126 the composition is skewed to basic and acidic residues; that stretch reads EEDEERCRKMASDASEEKDRKIEE. Positions 103-246 are disordered; that stretch reads EEDEERCRKM…ESGNEYSDSD (144 aa). Residue threonine 130 is modified to Phosphothreonine. Serine 131 is subject to Phosphoserine. Residues 157–168 show a composition bias toward basic residues; sequence NKKHKAERKRSP. Residues 175-184 are compositionally biased toward acidic residues; that stretch reads LEDDEEIEDV. Over residues 185-196 the composition is skewed to basic and acidic residues; it reads ASDKDEEEKPWS. The span at 197-215 shows a compositional bias: acidic residues; that stretch reads GDEEDDDELVVKDSEDETE. Serine 243 and serine 245 each carry phosphoserine.

It localises to the nucleus. Its subcellular location is the mitochondrion. This chain is PARP-type zinc finger-containing protein C2A9.07c, found in Schizosaccharomyces pombe (strain 972 / ATCC 24843) (Fission yeast).